The sequence spans 325 residues: Retinal homeobox protein Rx-B (325 aa).

The Octapeptide motif signature appears at 32–39 (HSIEAILG). A compositionally biased stretch (basic and acidic residues) spans 75 to 87 (TEEIHPQQEHLED). Positions 75–136 (TEEIHPQQEH…KKKHRRNRTT (62 aa)) are disordered. A compositionally biased stretch (polar residues) spans 99 to 117 (AKTSSECLSPGLSTSNSDN). A DNA-binding region (homeobox) is located at residues 130-189 (HRRNRTTFTTYQLHELERAFEKSHYPDVYSREELAMKVNLPEVRVQVWFQNRRAKWRRQE). The OAR motif lies at 302–315 (NSIASLRMKAKEHI). Residues 308–312 (RMKAK) carry the Nuclear localization signal motif.

Belongs to the paired homeobox family. Bicoid subfamily. In terms of tissue distribution, highly expressed in anterior neural plate followed by neural retina, pigmented epithelium, in pineal gland, diencephalon floor and epiphysis. At later stages, the neuroretina remains the primary site of expression. No expression in the developing lens and cornea.

The protein localises to the nucleus. Functionally, plays a critical role in eye formation by regulating the initial specification of retinal cells and/or their subsequent proliferation. In Xenopus laevis (African clawed frog), this protein is Retinal homeobox protein Rx-B (rax-b).